The sequence spans 216 residues: MTAPNQDPRRLWDISPPLSPATPVWPGDTPFQQQPAWQMDEHCPVNVGRITLSPHTGAHADAPLHYAADGAPIGAVPLTPYLGTCRVIHCIGASPVVEPRHIEHALAGLPPRVLLRTYRQAPLAQWDPHFCAVAAETIALLAAHGVQLVGIDTPSLDPQESKTMDAHNAVRRHGLAILEGIVLDEVDAGDYELIALPLRFAGLDASPVRAVLRSLD.

Tryptophan 25 contacts substrate. Residues histidine 55, histidine 59, and aspartate 61 each coordinate Zn(2+). The active-site Proton donor/acceptor is histidine 65. 2 residues coordinate Zn(2+): histidine 167 and glutamate 179.

This sequence belongs to the Cyclase 1 superfamily. KynB family. As to quaternary structure, homodimer. Zn(2+) is required as a cofactor.

The catalysed reaction is N-formyl-L-kynurenine + H2O = L-kynurenine + formate + H(+). Its pathway is amino-acid degradation; L-tryptophan degradation via kynurenine pathway; L-kynurenine from L-tryptophan: step 2/2. In terms of biological role, catalyzes the hydrolysis of N-formyl-L-kynurenine to L-kynurenine, the second step in the kynurenine pathway of tryptophan degradation. In Cupriavidus necator (strain ATCC 17699 / DSM 428 / KCTC 22496 / NCIMB 10442 / H16 / Stanier 337) (Ralstonia eutropha), this protein is Kynurenine formamidase.